Consider the following 386-residue polypeptide: MNIHEYQGKAVLRSYGVSVPNGKVAFTVEEAVEAAKELGTDVCVVKAQIHAGGRGKAGGVKVAKNLDEVRTYAESILGTTLVTHQTGPEGKEVKRLLIEEGCDIKKEYYVGLVLDRATSQVVLMASEEGGTEIEEVAEKTPEKIFKEYIDPAVGLQGFQARRIAFNINIPKELVGQAVKFMMGLYRAFIEKDCSIAEINPLVTTGEGKVMALDAKLNFDSNALYRHKDILELRDLDEEDSKEIEASKYDLNYIPLDGNIGCMVNGAGLAMATMDIIKHYHGDPANFLDVGGGATAEKVTEAFKIILSDKNVKGIFVNIFGGIMKCDVIAEGVIEATKQVGLELPLVVRLEGTNVELGKKILNESGLNIVAAESMADGAQKIVSLVG.

The region spanning 9–244 (KAVLRSYGVS…LDEEDSKEIE (236 aa)) is the ATP-grasp domain. ATP is bound by residues Lys46, 53-55 (GRG), Glu99, Cys102, and Glu107. 2 residues coordinate Mg(2+): Asn199 and Asp213. Substrate contacts are provided by residues Asn264 and 321-323 (GIM).

It belongs to the succinate/malate CoA ligase beta subunit family. As to quaternary structure, heterotetramer of two alpha and two beta subunits. Requires Mg(2+) as cofactor.

It carries out the reaction succinate + ATP + CoA = succinyl-CoA + ADP + phosphate. The enzyme catalyses GTP + succinate + CoA = succinyl-CoA + GDP + phosphate. It functions in the pathway carbohydrate metabolism; tricarboxylic acid cycle; succinate from succinyl-CoA (ligase route): step 1/1. In terms of biological role, succinyl-CoA synthetase functions in the citric acid cycle (TCA), coupling the hydrolysis of succinyl-CoA to the synthesis of either ATP or GTP and thus represents the only step of substrate-level phosphorylation in the TCA. The beta subunit provides nucleotide specificity of the enzyme and binds the substrate succinate, while the binding sites for coenzyme A and phosphate are found in the alpha subunit. The polypeptide is Succinate--CoA ligase [ADP-forming] subunit beta (Bacillus cereus (strain B4264)).